We begin with the raw amino-acid sequence, 587 residues long: Putative inactive receptor-like protein kinase At1g64210 (587 aa).

An N-terminal signal peptide occupies residues 1 to 19; that stretch reads MQIFLFFFSLILCFVLISS. Residues 20 to 232 lie on the Extracellular side of the membrane; sequence QTLEDDKKAL…KTPFGLSQLA (213 aa). N-linked (GlcNAc...) asparagine glycosylation is found at N37 and N44. LRR repeat units lie at residues 89-112, 113-136, 137-160, 161-183, and 184-205; these read SLKF…TNLK, SLTH…SELK, NLKV…SGLT, SLQV…HLPK, and LSQI…LQRF. Residues N149, N169, N188, and N214 are each glycosylated (N-linked (GlcNAc...) asparagine). A helical membrane pass occupies residues 233–253; it reads FLLILSAACVLCVSGLSFIMI. At 254–587 the chain is on the cytoplasmic side; the sequence is TCFGKTRISG…IEDIRSVDAE (334 aa). The Protein kinase domain occupies 307 to 581; the sequence is SSSAEVLGKG…AQVLKLIEDI (275 aa). S309 is modified (phosphoserine). Residues 313-321 and K335 each bind ATP; that span reads LGKGAFGTT. S386 carries the phosphoserine modification. Phosphothreonine is present on residues T462, T463, T466, and T477.

It is found in the cell membrane. In Arabidopsis thaliana (Mouse-ear cress), this protein is Putative inactive receptor-like protein kinase At1g64210.